The chain runs to 440 residues: Discs overgrown protein kinase (440 aa).

Residues 9-277 form the Protein kinase domain; it reads YRLGRKIGSG…HLRKLFRNLF (269 aa). Residues 15-23 and Lys38 contribute to the ATP site; that span reads IGSGSFGDI. Asp128 acts as the Proton acceptor in catalysis. The tract at residues 221 to 224 is nuclear localization signal; essential for interaction with Bdbt and important for nuclear localization; the sequence is KRQK. A phosphoserine mark is found at Ser333 and Ser334. Residues 376–440 form a disordered region; the sequence is SQLIGGNGLN…GGGGGVGNAK (65 aa). The span at 413–440 shows a compositional bias: gly residues; that stretch reads QGGGGGGGGVGVGGMPSGGGGGGVGNAK.

Belongs to the protein kinase superfamily. CK1 Ser/Thr protein kinase family. Casein kinase I subfamily. Forms a complex with per. Interacts with Dlish. Interacts (via nuclear localization signal) with Bdbt. In terms of tissue distribution, detected in the head (at protein level). Expressed in photoreceptor cells of the eyes as well as in the region situated between the optic lobe and the central brain.

It is found in the nucleus. Its subcellular location is the cytoplasm. The protein resides in the cytosol. The catalysed reaction is L-seryl-[protein] + ATP = O-phospho-L-seryl-[protein] + ADP + H(+). The enzyme catalyses L-threonyl-[protein] + ATP = O-phospho-L-threonyl-[protein] + ADP + H(+). Serine/threonine-protein kinase which is involved in the circadian rhythm pathway, viability and planar cell polarity. In the circadian rhythm pathway, phosphorylates the clock gene period (per) and targets it for degradation in the absence of timeless (tim), thus contributing to production of the circadian oscillations of the clock genes. Together with CkIalpha, regulates processing of ci by phosphorylating it, which promotes its binding to slmb, the F-box recognition component of the SCF(slmb) E3 ubiquitin-protein ligase. Involved in the inhibition of apoptosis during cell proliferation and growth arrest in imaginal disks. Also functions in planar cell polarity. The sequence is that of Discs overgrown protein kinase (dco) from Drosophila melanogaster (Fruit fly).